The following is a 562-amino-acid chain: Terpene synthase 2 (562 aa).

Residues D315, D319, D459, and E467 each contribute to the Mg(2+) site. Positions 315–319 match the DDXXD motif motif; sequence DDEYD.

The protein belongs to the terpene synthase family. Tpsa subfamily. Mg(2+) is required as a cofactor. Mn(2+) serves as cofactor. As to expression, expressed at low levels in stems, leaves, roots and fruits.

The enzyme catalyses (2E,6E)-farnesyl diphosphate = delta-cadinene + diphosphate. It catalyses the reaction (2E,6E)-farnesyl diphosphate = alpha-cadinene + diphosphate. The catalysed reaction is (2E,6E)-farnesyl diphosphate + H2O = (-)-delta-cadinol + diphosphate. It functions in the pathway secondary metabolite biosynthesis; terpenoid biosynthesis. In terms of biological role, sesquiterpene synthase involved in the biosynthesis of volatile compounds that contribute to the characteristic flavors of black pepper. Mediates the conversion of (2E,6E)-farnesyl diphosphate (FPP) into alpha-cadinene, delta-cadinene and delta-cadinol. This chain is Terpene synthase 2, found in Piper nigrum (Black pepper).